The chain runs to 197 residues: HTH-type transcriptional regulator BetI (197 aa).

The HTH tetR-type domain occupies 8–68; that stretch reads PIRRQQLIEA…ATMRYLMNAL (61 aa). The H-T-H motif DNA-binding region spans 31-50; that stretch reads SIALIARLAGVSNGIISHYF.

The protein operates within amine and polyamine biosynthesis; betaine biosynthesis via choline pathway [regulation]. Its function is as follows. Repressor involved in the biosynthesis of the osmoprotectant glycine betaine. It represses transcription of the choline transporter BetT and the genes of BetAB involved in the synthesis of glycine betaine. The polypeptide is HTH-type transcriptional regulator BetI (Pseudomonas fluorescens (strain SBW25)).